A 1667-amino-acid chain; its full sequence is Myomesin-1 (1667 aa).

Phosphoserine is present on residues Ser124 and Ser142. A compositionally biased stretch (low complexity) spans 192–210; sequence SKQSTASKQSATSKRTTST. Positions 192-217 are disordered; sequence SKQSTASKQSATSKRTTSTLQREETF. 2 Ig-like C2-type domains span residues 258–349 and 376–478; these read PEFI…ASVV and PYGY…AYVF. 3 Fibronectin type-III domains span residues 492–587, 620–714, and 721–814; these read APLD…ALDP, PPTD…VVGD, and APGK…VKAA. A disordered region spans residues 818–915; it reads GVSPDVWPQL…PKKKKDPVAV (98 aa). 2 positions are modified to phosphoserine: Ser863 and Ser867. Low complexity predominate over residues 885-894; that stretch reads EPLSSPPQEA. 2 Fibronectin type-III domains span residues 918–1016 and 1023–1122; these read APYD…CEEW and PPHS…TRPG. Phosphoserine is present on Ser1036. Ig-like C2-type domains lie at 1114 to 1212, 1340 to 1426, and 1555 to 1644; these read PVVA…EEMK, PHFA…LKLV, and RVLG…FTVS.

As to quaternary structure, homodimer. Interacts with TTN/titin and PNKD. Ubiquitously expressed in all striated muscles. Expressed in all fiber types.

The protein localises to the cytoplasm. It localises to the myofibril. The protein resides in the sarcomere. It is found in the m line. Its function is as follows. May link the intermediate filament cytoskeleton to the M-disk of the myofibrils in striated muscle. May also contact myosin filaments. Also binds beta-integrins. The protein is Myomesin-1 (Myom1) of Mus musculus (Mouse).